The sequence spans 103 residues: Histone H4.2 (103 aa).

Over residues 1–14 (MTGRGKGGKGLGKG) the composition is skewed to gly residues. The segment at 1–20 (MTGRGKGGKGLGKGGAKRHR) is disordered. Residue Lys6 is modified to N6-acetyl-N6-methyllysine; alternate. Lys6, Lys9, and Lys13 each carry N6-methyllysine; alternate. Lys13 is modified (N6-acetyl-N6-methyllysine; alternate). Residues 17-21 (KRHRK) mediate DNA binding. Lys92 is modified (N6-glutaryllysine).

The protein belongs to the histone H4 family. The nucleosome is a histone octamer containing two molecules each of H2A, H2B, H3 and H4 assembled in one H3-H4 heterotetramer and two H2A-H2B heterodimers. The octamer wraps approximately 147 bp of DNA. In terms of processing, glutarylation at Lys-92 (H4K91glu) destabilizes nucleosomes by promoting dissociation of the H2A-H2B dimers from nucleosomes.

Its subcellular location is the nucleus. The protein localises to the chromosome. Its function is as follows. Core component of nucleosome. Nucleosomes wrap and compact DNA into chromatin, limiting DNA accessibility to the cellular machineries which require DNA as a template. Histones thereby play a central role in transcription regulation, DNA repair, DNA replication and chromosomal stability. DNA accessibility is regulated via a complex set of post-translational modifications of histones, also called histone code, and nucleosome remodeling. The chain is Histone H4.2 (H4.2) from Talaromyces funiculosus (Fruitlet core rot fungus).